The primary structure comprises 1047 residues: Ubiquitin carboxyl-terminal hydrolase 28 (1047 aa).

Disordered stretches follow at residues aspartate 60–lysine 95 and serine 110–valine 138. Positions glutamate 94–alanine 113 constitute a UIM domain. The span at proline 111 to lysine 128 shows a compositional bias: basic and acidic residues. The region spanning valine 156–aspartate 651 is the USP domain. The active-site Nucleophile is cysteine 165. The segment covering serine 461–aspartate 486 has biased composition (polar residues). The tract at residues serine 461–cysteine 528 is disordered. Positions leucine 489–aspartate 498 are enriched in basic and acidic residues. A compositionally biased stretch (polar residues) spans alanine 504–leucine 516. Histidine 601 (proton acceptor) is an active-site residue. The disordered stretch occupies residues glutamate 694–leucine 735. Residues lysine 705–serine 717 show a composition bias toward polar residues.

It belongs to the peptidase C19 family. USP28 subfamily.

Its subcellular location is the nucleus. It is found in the nucleoplasm. The catalysed reaction is Thiol-dependent hydrolysis of ester, thioester, amide, peptide and isopeptide bonds formed by the C-terminal Gly of ubiquitin (a 76-residue protein attached to proteins as an intracellular targeting signal).. Deubiquitinase involved in DNA damage response checkpoint and MYC proto-oncogene stability. Involved in DNA damage induced apoptosis by specifically deubiquitinating proteins of the DNA damage pathway such as CLSPN. Also involved in G2 DNA damage checkpoint, by deubiquitinating CLSPN, and preventing its degradation by the anaphase promoting complex/cyclosome (APC/C). Specifically deubiquitinates MYC in the nucleoplasm, leading to prevent MYC degradation by the proteasome. Deubiquitinates ZNF304, hence may prevent ZNF304 degradation by the proteasome, leading to the activated KRAS-mediated promoter hypermethylation and transcriptional silencing of tumor suppressor genes (TSGs). This is Ubiquitin carboxyl-terminal hydrolase 28 (USP28) from Gallus gallus (Chicken).